Consider the following 1075-residue polypeptide: mRNA-binding protein PUF2 (1075 aa).

The disordered stretch occupies residues N38–A68. Position 72 is a phosphoserine (S72). Residues T93–P105 are compositionally biased toward low complexity. Residues T93 to T112 form a disordered region. S198 is subject to Phosphoserine. Positions N316–V402 constitute an RRM domain. In terms of domain architecture, PUM-HD spans E511–S872. Pumilio repeat units lie at residues A574–R611, K612–T647, G649–E683, S684–T719, S722–C758, and K760–H800. A phosphoserine mark is found at S872 and S876. Disordered regions lie at residues G874 to N931 and N997 to Y1075. Composition is skewed to low complexity over residues V901–V916, N997–N1009, and N1018–N1063.

The protein localises to the cytoplasm. Functionally, RNA-binding protein involved in post-transcriptional regulation. Negatively regulates expression of COX17 by binding to the 3'-UTR of COX17 mRNA. Promotes decay of COX17 mRNA by enhancing its rate of deadenylation and subsequent turnover. Predominantly binds to mRNAs encoding membrane-associated proteins with roles in transmembrane transport and vesicular trafficking. This is mRNA-binding protein PUF2 (PUF2) from Saccharomyces cerevisiae (strain ATCC 204508 / S288c) (Baker's yeast).